An 80-amino-acid polypeptide reads, in one-letter code: Exodeoxyribonuclease 7 small subunit (80 aa).

This sequence belongs to the XseB family. In terms of assembly, heterooligomer composed of large and small subunits.

It is found in the cytoplasm. It carries out the reaction Exonucleolytic cleavage in either 5'- to 3'- or 3'- to 5'-direction to yield nucleoside 5'-phosphates.. In terms of biological role, bidirectionally degrades single-stranded DNA into large acid-insoluble oligonucleotides, which are then degraded further into small acid-soluble oligonucleotides. This chain is Exodeoxyribonuclease 7 small subunit, found in Escherichia coli O139:H28 (strain E24377A / ETEC).